Here is a 905-residue protein sequence, read N- to C-terminus: MKVLEDYRSLVHGIGSLDFSGDAVPCKLLLTGDTAFPVLVTPRKDVLIAASRYGKGKVVVMAHESYLNTNAFMDFLKNAVSWLSPNSEANIGVHKGLNLLTDNLSANGSKVQNTSTLIEGLGVFCTIGYDDSQDKQIISFVREGGGLLIGAQAWHWSYSHKQENVLHHFPGNKIISVSGVHFTSDYGEKGNICVMENIPQAPIYTSFDFSLDQKYLLKGMSQLDISGSSIPSDLLLHGTLSFPVGLSENKQCFLGATYYGKGRVVVATHEGYLSKSELKTIMLNAISWLDINQNRRIGVHKGLRQFAELLQKENIPCNISSLDPDLSVYCCTSYSDAEAKAIHEFVAEGGGLLIAGHAWYWSSQNSDLDVLIQYPGNKILNKFGISILDRTIPGGNYNAINPDESSQQYHFRRGLCNLQAELRSGAEVKPPLSIWMNKLRQDVTAFMRLPANPIISSIQSQFVEMMQICEIPNVTKQCPVSSCSKEAFILCLAQECFNVCDESHILEKEPSITVEIDGTNPGNNAWRSTGLYLAPRKTAVLEFPASAVHQGLQVQVGCQSDDLSSADKYCRAPVVVRRFHVDSQRVSVSCFWGGLVYITVKANSNLGIIPVKVYEAEPAPIYIKGKTSLDTWIQSIRNLPAPWAELITENIILTVPSDAIRSLSDPEALLSLWDKIMVAITELAAIPKKLPRPERFVADVQISAGWMHAGYPIMCHLESAKELTDLNIMQTGGIWGPIHELGHNQQKTNWELPPHTTEATCNLWSVYVHETVLGIPRSQAHCCLQAETRANHIQEYLRNGSNIEQWNVWTALETYLQLQEGFGWEPFKQLFKDYQSMSGIRNENKSKMNLWAEKFSEAVQTNLVPFFEAWGWPIEEATHSKLSVLPVWEKDPMKSYLSARKSNSN.

Positions 524–823 constitute a Peptidase M60 domain; it reads NAWRSTGLYL…TYLQLQEGFG (300 aa).

Belongs to the TCAF family.

In terms of biological role, may play a role in the regulation of the cation channel TRPM8 activity. This Xenopus laevis (African clawed frog) protein is TRPM8 channel-associated factor homolog (tcaf).